Reading from the N-terminus, the 176-residue chain is Probable DNA-directed RNA polymerase subunit delta (176 aa).

An HTH HARE-type domain is found at 14 to 81; that stretch reads CSMIEVVHSV…GENRWGLRSW (68 aa). A disordered region spans residues 91 to 176; the sequence is ILPQPKPKKK…ETEEEEEEEL (86 aa). Residues 106–176 show a composition bias toward acidic residues; sequence DGFDDYIEED…ETEEEEEEEL (71 aa).

Belongs to the RpoE family. RNAP is composed of a core of 2 alpha, a beta and a beta' subunits. The core is associated with a delta subunit and one of several sigma factors.

Functionally, participates in both the initiation and recycling phases of transcription. In the presence of the delta subunit, RNAP displays an increased specificity of transcription, a decreased affinity for nucleic acids, and an increased efficiency of RNA synthesis because of enhanced recycling. This is Probable DNA-directed RNA polymerase subunit delta from Bacillus thuringiensis (strain Al Hakam).